Consider the following 169-residue polypeptide: Menaquinol:cytochrome c reductase iron-sulfur subunit (169 aa).

A Rieske domain is found at 62–160 (EPKRFDFKVK…FEVKDGKLYL (99 aa)). The [2Fe-2S] cluster site is built by Cys102, His104, Cys123, and His126. An intrachain disulfide couples Cys107 to Cys125.

Belongs to the Rieske iron-sulfur protein family. As to quaternary structure, the main subunits of the menaquinol:cytochrome c complex are a Rieske-type iron-sulfur protein (QcrA), a cytochrome b (QcrB) and a cytochrome c (QcrC). [2Fe-2S] cluster serves as cofactor.

Its function is as follows. Component of the menaquinol:cytochrome c reductase complex. The Rieske protein is a high potential 2Fe-2S protein. This is Menaquinol:cytochrome c reductase iron-sulfur subunit (qcrA) from Geobacillus thermodenitrificans.